The primary structure comprises 1260 residues: Myosin-1 (1260 aa).

The Myosin motor domain maps to 34–713 (VGVSDLTLLS…TLFALEHMRD (680 aa)). 127–134 (GESGAGKT) is an ATP binding site. Phosphoserine is present on Ser-355. The segment at 402 to 484 (SIGILDIYGF…PGIFATLDDS (83 aa)) is actin-binding. IQ domains follow at residues 717–737 (YNMA…RIDS) and 738–763 (AIKI…YGHR). A TH1 domain is found at 769 to 959 (KERRAMSLLG…TISVRQGRPA (191 aa)). Composition is skewed to polar residues over residues 948 to 963 (SSTI…NSRQ) and 972 to 988 (TLLS…SKGY). The segment at 948–1106 (SSTISVRQGR…PPPPTKQNIP (159 aa)) is disordered. The span at 989-1013 (GQQQHAQPSYGQQQQQQQRYAPQSH) shows a compositional bias: low complexity. A compositionally biased stretch (polar residues) spans 1030–1064 (QQNFAASAAQTAYHPQQASHARVPSTNNAHTQHNR). The segment covering 1065–1082 (QPAQQAAQPVQQAAQPAA) has biased composition (low complexity). Positions 1092-1101 (APPPPPPPPT) are enriched in pro residues. The SH3 domain occupies 1103 to 1165 (QNIPKFQAAY…PTNYIVEYKE (63 aa)).

The protein belongs to the TRAFAC class myosin-kinesin ATPase superfamily. Myosin family. In terms of processing, phosphorylation of the TEDS site (Ser-355) is required for the polarization of the actin cytoskeleton. Phosphorylation probably activates the myosin-I ATPase activity.

The protein resides in the cytoplasm. It localises to the cytoskeleton. It is found in the actin patch. Type-I myosin implicated in the organization of the actin cytoskeleton. Required for proper actin cytoskeleton polarization. At the cell cortex, assembles in patch-like structures together with proteins from the actin-polymerizing machinery and promotes actin assembly. Functions as actin nucleation-promoting factor (NPF) for the Arp2/3 complex. The protein is Myosin-1 (MYO1) of Kluyveromyces lactis (strain ATCC 8585 / CBS 2359 / DSM 70799 / NBRC 1267 / NRRL Y-1140 / WM37) (Yeast).